The following is a 291-amino-acid chain: Transcription initiation factor IIE subunit beta (291 aa).

M1 bears the N-acetylmethionine mark. The segment covering 1-13 (MDPSLLRERELFK) has biased composition (basic and acidic residues). The tract at residues 1 to 63 (MDPSLLRERE…NSDHSNGSFN (63 aa)) is disordered. The span at 50-62 (GSKQNSDHSNGSF) shows a compositional bias: polar residues. Phosphoserine is present on S61. A DNA-binding region (TFIIE beta) is located at residues 66–146 (ALSGSSGYKF…YAFKPKYNVR (81 aa)). Residue K74 is modified to N6-acetyllysine. The segment at 243 to 272 (SSMQESGPKKVAPIQRRKKPASQKKRRFKT) is disordered. Positions 257-271 (QRRKKPASQKKRRFK) are enriched in basic residues.

This sequence belongs to the TFIIE beta subunit family. In terms of assembly, tetramer of two alpha and two beta chains. Interacts with FACT subunit SUPT16H. Interacts with ATF7IP. Interacts with SND1. Part of TBP-based Pol II pre-initiation complex (PIC), in which Pol II core assembles with general transcription factors and other specific initiation factors including GTF2E1, GTF2E2, GTF2F1, GTF2F2, TCEA1, ERCC2, ERCC3, GTF2H2, GTF2H3, GTF2H4, GTF2H5, GTF2A1, GTF2A2, GTF2B and TBP; this large multi-subunit PIC complex mediates DNA unwinding and targets Pol II core to the transcription start site where the first phosphodiester bond forms.

The protein localises to the nucleus. Its function is as follows. Recruits TFIIH to the initiation complex and stimulates the RNA polymerase II C-terminal domain kinase and DNA-dependent ATPase activities of TFIIH. Both TFIIH and TFIIE are required for promoter clearance by RNA polymerase. The protein is Transcription initiation factor IIE subunit beta (GTF2E2) of Homo sapiens (Human).